Consider the following 115-residue polypeptide: Hydrogenase maturation factor HypA (115 aa).

His-2 contacts Ni(2+). Cys-73, Cys-76, Cys-89, and Cys-92 together coordinate Zn(2+).

The protein belongs to the HypA/HybF family.

Involved in the maturation of [NiFe] hydrogenases. Required for nickel insertion into the metal center of the hydrogenase. This chain is Hydrogenase maturation factor HypA, found in Parabacteroides distasonis (strain ATCC 8503 / DSM 20701 / CIP 104284 / JCM 5825 / NCTC 11152).